We begin with the raw amino-acid sequence, 407 residues long: MDIILGVVMFTLIVLALVLVILFAKSKLVPTGDITISINGDADKSIVTSPGGKLLSALAGAGVFVSSACGGGGSCGQCRVKVKSGGGDILPTELDHITKGEAREGERLACQVAVKTDMDIELPEEIFGVKKWECTVISNDNKATFIKELKLQIPDGESVPFRAGGYIQIEAPAHHVKYADFDVPEEYRGDWDKFNLFRYESIVKEDIIRAYSMANYPEEFGIIMLNVRIATPPPNNPDVAPGQMSSYIWSLKEGDKCTISGPFGEFFAKDTDAEMVFIGGGAGMAPMRSHIFDQLKRLKSKRKMSYWYGARSKREMFYVEDFDGLAAENDNFVWHCALSDPLPEDNWDGYTGFIHNVLYENYLRDHDAPEDCEYYMCGPPMMNAAVIGMLKNLGVEDENILLDDFGG.

The helical transmembrane segment at 3–23 threads the bilayer; sequence IILGVVMFTLIVLALVLVILF. The 2Fe-2S ferredoxin-type domain occupies 32–126; sequence GDITISINGD…DMDIELPEEI (95 aa). Residues cysteine 69, cysteine 75, cysteine 78, and cysteine 110 each coordinate [2Fe-2S] cluster. Residues 129–269 enclose the FAD-binding FR-type domain; it reads VKKWECTVIS…SGPFGEFFAK (141 aa). Positions 272–389 are catalytic; the sequence is DAEMVFIGGG…PMMNAAVIGM (118 aa).

It belongs to the NqrF family. Composed of six subunits; NqrA, NqrB, NqrC, NqrD, NqrE and NqrF. The cofactor is [2Fe-2S] cluster. FAD serves as cofactor.

The protein localises to the cell inner membrane. It carries out the reaction a ubiquinone + n Na(+)(in) + NADH + H(+) = a ubiquinol + n Na(+)(out) + NAD(+). NQR complex catalyzes the reduction of ubiquinone-1 to ubiquinol by two successive reactions, coupled with the transport of Na(+) ions from the cytoplasm to the periplasm. The first step is catalyzed by NqrF, which accepts electrons from NADH and reduces ubiquinone-1 to ubisemiquinone by a one-electron transfer pathway. This Vibrio vulnificus (strain CMCP6) protein is Na(+)-translocating NADH-quinone reductase subunit F.